Consider the following 434-residue polypeptide: uncharacterized protein (434 aa).

At K216 the chain carries N6-(pyridoxal phosphate)lysine.

This is an uncharacterized protein from Schizosaccharomyces pombe (strain 972 / ATCC 24843) (Fission yeast).